Consider the following 99-residue polypeptide: UPF0213 protein YazA (99 aa).

In terms of domain architecture, GIY-YIG spans 4-79 (NNHFFYVVKC…KKLTRKKKEL (76 aa)).

It belongs to the UPF0213 family.

The protein is UPF0213 protein YazA (yazA) of Bacillus subtilis (strain 168).